A 360-amino-acid chain; its full sequence is Phospho-N-acetylmuramoyl-pentapeptide-transferase (360 aa).

10 helical membrane passes run 21–41 (YITVRAILTLLTALFISLWIG), 73–93 (TMGGVMILFSIGVSTLLWANL), 94–114 (ANPYIWVCLFVLFGYGAIGFV), 132–152 (WKYFWMSVVALVAILWLYWLG), 168–188 (IMPQLGLFYIVLSYFVIVGTG), 199–219 (GLAIMPTALVAGAFALIAWAT), 239–259 (VVVFCTAIVGASLGFLWFNTY), 263–283 (VFMGDVGSLALGGALGVVAIL), 288–308 (FLLVIMGGVFVVEALSVILQV), and 338–358 (VIIRFWIISLMLVLMGLVTLK).

This sequence belongs to the glycosyltransferase 4 family. MraY subfamily. It depends on Mg(2+) as a cofactor.

It localises to the cell inner membrane. The catalysed reaction is UDP-N-acetyl-alpha-D-muramoyl-L-alanyl-gamma-D-glutamyl-meso-2,6-diaminopimeloyl-D-alanyl-D-alanine + di-trans,octa-cis-undecaprenyl phosphate = di-trans,octa-cis-undecaprenyl diphospho-N-acetyl-alpha-D-muramoyl-L-alanyl-D-glutamyl-meso-2,6-diaminopimeloyl-D-alanyl-D-alanine + UMP. The protein operates within cell wall biogenesis; peptidoglycan biosynthesis. Its function is as follows. Catalyzes the initial step of the lipid cycle reactions in the biosynthesis of the cell wall peptidoglycan: transfers peptidoglycan precursor phospho-MurNAc-pentapeptide from UDP-MurNAc-pentapeptide onto the lipid carrier undecaprenyl phosphate, yielding undecaprenyl-pyrophosphoryl-MurNAc-pentapeptide, known as lipid I. The protein is Phospho-N-acetylmuramoyl-pentapeptide-transferase of Haemophilus influenzae (strain PittEE).